Here is a 210-residue protein sequence, read N- to C-terminus: Transcription factor ALC (210 aa).

Residues 1 to 49 form a disordered region; it reads MGDSDVGDRLPPPSSSDELSSFLRQILSRTPTAQPSSPPKSTNVSSAET. A compositionally biased stretch (polar residues) spans 27–48; sequence LSRTPTAQPSSPPKSTNVSSAE. Positions 93 to 142 constitute a bHLH domain; it reads IDAQFHNLSEKKRRSKINEKMKALQKLIPNSNKTDKASMLDEAIEYLKQL.

As to quaternary structure, homodimer. Expressed constitutively in roots, leaves, stems, and flowers. Confined to the valve margins of the silique.

Its subcellular location is the nucleus. In terms of biological role, required for the dehiscence of fruit, especially for the separation of the valve cells from the replum. Promotes the differentiation of a strip of labile nonlignified cells sandwiched between layers of lignified cells. This is Transcription factor ALC (ALC) from Arabidopsis thaliana (Mouse-ear cress).